The primary structure comprises 143 residues: Large ribosomal subunit protein uL11 (143 aa).

Belongs to the universal ribosomal protein uL11 family. In terms of assembly, part of the ribosomal stalk of the 50S ribosomal subunit. Interacts with L10 and the large rRNA to form the base of the stalk. L10 forms an elongated spine to which L12 dimers bind in a sequential fashion forming a multimeric L10(L12)X complex. One or more lysine residues are methylated.

Functionally, forms part of the ribosomal stalk which helps the ribosome interact with GTP-bound translation factors. This is Large ribosomal subunit protein uL11 from Pseudomonas savastanoi pv. phaseolicola (strain 1448A / Race 6) (Pseudomonas syringae pv. phaseolicola (strain 1448A / Race 6)).